The following is a 457-amino-acid chain: Argininosuccinate lyase (457 aa).

This sequence belongs to the lyase 1 family. Argininosuccinate lyase subfamily.

Its subcellular location is the cytoplasm. The catalysed reaction is 2-(N(omega)-L-arginino)succinate = fumarate + L-arginine. It functions in the pathway amino-acid biosynthesis; L-arginine biosynthesis; L-arginine from L-ornithine and carbamoyl phosphate: step 3/3. The protein is Argininosuccinate lyase of Shigella dysenteriae serotype 1 (strain Sd197).